The following is a 703-amino-acid chain: MKTLFIAPTRNGVGLTSTALGLLRALERQGLKVAFLKPIAQTHEAAPDDSVHWARTLAHAVTPDPILLSVAEEQLSQGQEEELMENVVALAREAAAGVTGGADVLVVEGLALNERNVYAGPLNASLARNLEADVVLVSSLAGVTPATLADELEIAAQAYRRSDGSGLAGYVLNFAPLELDFGGLLADLRARSRILASGELPLLGVIAQSPTLAAPRTLDVARHLGAEVLNEGEARLRRVTSTVVTARSVPKMADLFTSGALVVTPGDREDVVMAAALSHLSGVPLAGLLFTSGSTPEAAIERLCRAALTSTLPVLRVETNSYNTASRLSRMEARVPHDDLERMERTLDFIADRLDTVPLGTRLRAPEGSERRLPPSAFRYELIQKARAANKRIVLPEGDEPRTVRAAIRCVEKGIARCVLLAQPEKVRQVAEGQGLTLPDGLEIIDPDRVRANYVAPMVELRKHKGLTAPQAEAQLEDNVVLGTMMLALDEVDGLVSGAVHTTANTVRPALQLIKTAPGVRLVSSIFFMLMPEQVVVYGDAAINPNPNAEELADIAIQSADSARAFGIPPRIAMLSYSTGESGAGADVEKVRIATRLVRERRPDLPVDGPLQYDAASVLSVGRQKAPNSPVAGRATVFIFPDLNTGNTTYKAVQRAAGVVAVGPMLQGLRKPVNDLSRGALVDDIVYTIALTAIQATQAREGA.

The phosphate acetyltransferase stretch occupies residues 377–703; the sequence is AFRYELIQKA…IQATQAREGA (327 aa).

In the N-terminal section; belongs to the CobB/CobQ family. The protein in the C-terminal section; belongs to the phosphate acetyltransferase and butyryltransferase family.

Its subcellular location is the cytoplasm. It catalyses the reaction acetyl-CoA + phosphate = acetyl phosphate + CoA. It participates in metabolic intermediate biosynthesis; acetyl-CoA biosynthesis; acetyl-CoA from acetate: step 2/2. Functionally, involved in acetate metabolism. The chain is Phosphate acetyltransferase (pta) from Deinococcus geothermalis (strain DSM 11300 / CIP 105573 / AG-3a).